A 177-amino-acid polypeptide reads, in one-letter code: Putative zinc finger protein 826 (177 aa).

Residues 99 to 114 form a C2H2-type 1; degenerate zinc finger; that stretch reads KTFTWSSSPHKHRRTH. The C2H2-type 2; degenerate zinc finger occupies 120–142; sequence YKCEECGKAFTASSTLSEYKTIH. Residues 148-170 form a C2H2-type 3 zinc finger; it reads CKCEECGKAFNWSSDFNKHKRIH.

The protein resides in the nucleus. Functionally, may be involved in transcriptional regulation. This is Putative zinc finger protein 826 (ZNF826P) from Homo sapiens (Human).